The primary structure comprises 393 residues: Myb-related transcription factor, partner of profilin (393 aa).

Over residues 1-11 the composition is skewed to low complexity; the sequence is MASATAAAAPG. The disordered stretch occupies residues 1 to 21; the sequence is MASATAAAAPGEAEETTRLRK. Residues 16–88 form the Myb-like domain; that stretch reads TTRLRKPRFS…EVQKRWNDFK (73 aa). The short motif at 87-90 is the Nuclear localization signal element; the sequence is FKRR. Disordered regions lie at residues 125-254, 290-323, and 348-393; these read GPGV…EQSL, PLLP…APKV, and IISP…WKSP. A compositionally biased stretch (low complexity) spans 142-157; sequence AAASSQPQASTASTQR. Over residues 160–171 the composition is skewed to basic and acidic residues; the sequence is LSEDRRQDRRAD. A compositionally biased stretch (polar residues) spans 173–184; sequence PAQSKGGSSSPE. 4 stretches are compositionally biased toward pro residues: residues 219–229, 238–247, 296–320, and 359–368; these read PPLPAPPPPPT, SPSPTPPRPT, PADP…PPSA, and KPLPPAPPLP. Basic residues predominate over residues 375-393; that stretch reads HKRRKGFPTRKRRGRWKSP. 2 short sequence motifs (nuclear localization signal) span residues 376 to 379 and 384 to 387; these read KRRK and RKRR.

Interacts with PFN1. Homodimer and heterodimer with PFN1. As to expression, ubiquitous. Highly expressed in brain, liver and testis. Moderate expression in heart, lung and skeletal muscle. Low expression in spleen and kidney.

It is found in the nucleus. In terms of biological role, transcriptional repressor; DNA-binding protein that specifically recognizes the core sequence 5'-YAAC[GT]G-3'. Dimerization with PFN1 reduces its DNA-binding capacity. The sequence is that of Myb-related transcription factor, partner of profilin (Mypop) from Mus musculus (Mouse).